A 356-amino-acid chain; its full sequence is sn-glycerol-3-phosphate import ATP-binding protein UgpC (356 aa).

One can recognise an ABC transporter domain in the interval L4–I235. G37–S44 lines the ATP pocket.

Belongs to the ABC transporter superfamily. sn-glycerol-3-phosphate importer (TC 3.A.1.1.3) family. In terms of assembly, the complex is composed of two ATP-binding proteins (UgpC), two transmembrane proteins (UgpA and UgpE) and a solute-binding protein (UgpB).

The protein localises to the cell inner membrane. The catalysed reaction is sn-glycerol 3-phosphate(out) + ATP + H2O = sn-glycerol 3-phosphate(in) + ADP + phosphate + H(+). Functionally, part of the ABC transporter complex UgpBAEC involved in sn-glycerol-3-phosphate (G3P) import. Responsible for energy coupling to the transport system. This chain is sn-glycerol-3-phosphate import ATP-binding protein UgpC, found in Salmonella choleraesuis (strain SC-B67).